The sequence spans 127 residues: Protein yippee-like 4 (127 aa).

One can recognise a Yippee domain in the interval 27–124 (RTYSCVHCRA…IEMSHMVKDN (98 aa)). The Zn(2+) site is built by Cys-31, Cys-34, Cys-87, and Cys-90. Residues Thr-92 and Thr-93 each carry the phosphothreonine modification. Tyr-98 carries the phosphotyrosine modification.

Belongs to the yippee family.

It is found in the nucleus. The protein resides in the nucleolus. This is Protein yippee-like 4 (YPEL4) from Chlorocebus aethiops (Green monkey).